The following is a 278-amino-acid chain: Tryptophan synthase alpha chain (278 aa).

Active-site proton acceptor residues include glutamate 50 and aspartate 61.

Belongs to the TrpA family. In terms of assembly, tetramer of two alpha and two beta chains.

It catalyses the reaction (1S,2R)-1-C-(indol-3-yl)glycerol 3-phosphate + L-serine = D-glyceraldehyde 3-phosphate + L-tryptophan + H2O. It functions in the pathway amino-acid biosynthesis; L-tryptophan biosynthesis; L-tryptophan from chorismate: step 5/5. Functionally, the alpha subunit is responsible for the aldol cleavage of indoleglycerol phosphate to indole and glyceraldehyde 3-phosphate. The protein is Tryptophan synthase alpha chain of Rhodopseudomonas palustris (strain BisB5).